A 255-amino-acid polypeptide reads, in one-letter code: Ribonuclease HII (255 aa).

An RNase H type-2 domain is found at 70-255 (ELIAGVDEVG…FEPIKSIIKK (186 aa)). A divalent metal cation is bound by residues aspartate 76, glutamate 77, and aspartate 168.

This sequence belongs to the RNase HII family. It depends on Mn(2+) as a cofactor. Mg(2+) is required as a cofactor.

The protein resides in the cytoplasm. It catalyses the reaction Endonucleolytic cleavage to 5'-phosphomonoester.. Functionally, endonuclease that specifically degrades the RNA of RNA-DNA hybrids. The polypeptide is Ribonuclease HII (Streptococcus thermophilus (strain ATCC BAA-491 / LMD-9)).